The chain runs to 377 residues: Carbamoyl phosphate synthase small chain (377 aa).

Residues 1 to 186 form a CPSase region; it reads MNTPALLVLA…LGKGFVTPDK (186 aa). Positions 47, 238, and 240 each coordinate L-glutamine. A Glutamine amidotransferase type-1 domain is found at 190–377; that stretch reads HVVAYDFGVK…IGNMKAAKQA (188 aa). The active-site Nucleophile is the Cys266. 5 residues coordinate L-glutamine: Leu267, Gln270, Asn308, Gly310, and Phe311. Active-site residues include His350 and Glu352.

Belongs to the CarA family. As to quaternary structure, composed of two chains; the small (or glutamine) chain promotes the hydrolysis of glutamine to ammonia, which is used by the large (or ammonia) chain to synthesize carbamoyl phosphate. Tetramer of heterodimers (alpha,beta)4.

It carries out the reaction hydrogencarbonate + L-glutamine + 2 ATP + H2O = carbamoyl phosphate + L-glutamate + 2 ADP + phosphate + 2 H(+). The catalysed reaction is L-glutamine + H2O = L-glutamate + NH4(+). The protein operates within amino-acid biosynthesis; L-arginine biosynthesis; carbamoyl phosphate from bicarbonate: step 1/1. It functions in the pathway pyrimidine metabolism; UMP biosynthesis via de novo pathway; (S)-dihydroorotate from bicarbonate: step 1/3. In terms of biological role, small subunit of the glutamine-dependent carbamoyl phosphate synthetase (CPSase). CPSase catalyzes the formation of carbamoyl phosphate from the ammonia moiety of glutamine, carbonate, and phosphate donated by ATP, constituting the first step of 2 biosynthetic pathways, one leading to arginine and/or urea and the other to pyrimidine nucleotides. The small subunit (glutamine amidotransferase) binds and cleaves glutamine to supply the large subunit with the substrate ammonia. The polypeptide is Carbamoyl phosphate synthase small chain (Neisseria gonorrhoeae).